Reading from the N-terminus, the 133-residue chain is Profilin-4 (133 aa).

The cysteines at positions 13 and 117 are disulfide-linked. Residues 83-99 carry the Involved in PIP2 interaction motif; sequence AVIRGKKGSGGITIKKT. Thr113 bears the Phosphothreonine mark.

It belongs to the profilin family. Occurs in many kinds of cells as a complex with monomeric actin in a 1:1 ratio. Phosphorylated by MAP kinases.

The protein resides in the cytoplasm. The protein localises to the cytoskeleton. Binds to actin and affects the structure of the cytoskeleton. At high concentrations, profilin prevents the polymerization of actin, whereas it enhances it at low concentrations. The chain is Profilin-4 from Corylus avellana (European hazel).